The sequence spans 899 residues: Core protein VP3 (899 aa).

The segment at 1 to 22 is disordered; the sequence is MAEPPDAATPKTSPYLKGDELS.

Belongs to the orbivirus VP3 family.

It localises to the virion. The VP3 protein is one of the five proteins (with VP1, VP4, VP6 and VP7) which form the inner capsid of the virus. This chain is Core protein VP3 (Segment-3), found in Antilocapra americana (Pronghorn).